The following is a 294-amino-acid chain: MFKSGFISIIGRPNVGKSTLTNEILGEKLSIVSCRPQTTRNNIRAVLTRDDYQLVFLDTPGIHKPRHKLGEYMVKAAETSTDEVDLIVFITTPEGEISKGDELILEGLKNSKKPVFLVINKIDENPQELVAKTLKQYSEYMDFAEIIPISARKSKNVDTLLELMIKYMPEGPKYYPEDMITDVQERFVVSEIIREKALKLLSEEVPHGIAVEIISMKQSKRGTYHIDANLLCEKDSHKGIIIGKGGQKLKTISTYARQDIEKFLDAKVNLKVWVKVKKEWRDSNFMLKELGYKE.

Residues 3–170 (KSGFISIIGR…LELMIKYMPE (168 aa)) enclose the Era-type G domain. Residues 11–18 (GRPNVGKS) are G1. GTP is bound at residue 11–18 (GRPNVGKS). The tract at residues 37–41 (QTTRN) is G2. Residues 58–61 (DTPG) form a G3 region. GTP-binding positions include 58-62 (DTPGI) and 120-123 (NKID). The tract at residues 120 to 123 (NKID) is G4. The interval 149–151 (ISA) is G5. A KH type-2 domain is found at 201 to 278 (LSEEVPHGIA…NLKVWVKVKK (78 aa)).

It belongs to the TRAFAC class TrmE-Era-EngA-EngB-Septin-like GTPase superfamily. Era GTPase family. As to quaternary structure, monomer.

It localises to the cytoplasm. It is found in the cell membrane. In terms of biological role, an essential GTPase that binds both GDP and GTP, with rapid nucleotide exchange. Plays a role in 16S rRNA processing and 30S ribosomal subunit biogenesis and possibly also in cell cycle regulation and energy metabolism. The protein is GTPase Era of Clostridium novyi (strain NT).